The sequence spans 83 residues: Conotoxin p21a (83 aa).

A 4-hydroxyproline; partial mark is found at proline 24 and proline 43. Histidine 83 carries the post-translational modification Histidine amide.

As to quaternary structure, may form a non-covalent dimer. Post-translationally, contains 5 disulfide bonds. Expressed by the venom duct.

The protein resides in the secreted. The protein is Conotoxin p21a of Conus purpurascens (Purple cone).